Consider the following 307-residue polypeptide: Taste receptor type 2 member 41 (307 aa).

The Extracellular segment spans residues 1-7 (MQAALMA). The chain crosses the membrane as a helical span at residues 8–28 (FFMLLFSLLSLLGIAANGFIV). The Cytoplasmic segment spans residues 29–40 (LVLGREWLRYGR). A helical transmembrane segment spans residues 41–61 (LLPLDMILISLGASRXCLQLV). Residues 62–88 (GTVHNFYYSARKVEYSGGLGRQFFHLH) lie on the Extracellular side of the membrane. The helical transmembrane segment at 89–109 (WHFLNSATFWFCSWLSVLFCV) threads the bilayer. Over 110–129 (KIANITHPTFLWLKWRFPGW) the chain is Cytoplasmic. A helical transmembrane segment spans residues 130–150 (VPWLLLGSVLISFIITLLFFW). Topologically, residues 151–183 (VNYPVYQELLIRKFSGNMTYKWNTRIETYYFPS) are extracellular. A glycan (N-linked (GlcNAc...) asparagine) is linked at Asn-167. Residues 184–204 (LKLVIWSIPFSVFLVSIMLLI) traverse the membrane as a helical segment. Residues 205–234 (NSLRRHTQRMQHNGHSLQDPSTQAHTRALK) lie on the Cytoplasmic side of the membrane. The helical transmembrane segment at 235-255 (SLISFLFLYALSFLSLIIDAT) threads the bilayer. At 256–264 (KFISMQNDF) the chain is on the extracellular side. Residues 265–285 (YWPWQIAVYLCISVHPFILIF) traverse the membrane as a helical segment. Residues 286–307 (SNLKLRSMFWQVLLLARGFWVA) lie on the Cytoplasmic side of the membrane.

The protein belongs to the G-protein coupled receptor T2R family.

It is found in the membrane. Functionally, receptor that may play a role in the perception of bitterness and is gustducin-linked. May play a role in sensing the chemical composition of the gastrointestinal content. The activity of this receptor may stimulate alpha gustducin, mediate PLC-beta-2 activation and lead to the gating of TRPM5. In Gorilla gorilla gorilla (Western lowland gorilla), this protein is Taste receptor type 2 member 41 (TAS2R41).